The primary structure comprises 338 residues: Heat-inducible transcription repressor HrcA (338 aa).

It belongs to the HrcA family.

Its function is as follows. Negative regulator of class I heat shock genes (grpE-dnaK-dnaJ and groELS operons). Prevents heat-shock induction of these operons. The protein is Heat-inducible transcription repressor HrcA of Streptomyces albus G.